Consider the following 503-residue polypeptide: Probable protein kinase UbiB (503 aa).

Residues T13 to L35 traverse the membrane as a helical segment. One can recognise a Protein kinase domain in the interval E120 to V491. ATP contacts are provided by residues I126–V134 and K148. Residue D283 is the Proton acceptor of the active site. Residues Q485–L502 traverse the membrane as a helical segment.

It belongs to the ABC1 family. UbiB subfamily.

Its subcellular location is the cell inner membrane. It participates in cofactor biosynthesis; ubiquinone biosynthesis [regulation]. Is probably a protein kinase regulator of UbiI activity which is involved in aerobic coenzyme Q (ubiquinone) biosynthesis. The chain is Probable protein kinase UbiB from Neisseria meningitidis serogroup A / serotype 4A (strain DSM 15465 / Z2491).